A 1233-amino-acid polypeptide reads, in one-letter code: Capping protein-inhibiting regulator of actin dynamics (1233 aa).

A phosphoserine mark is found at Ser-7, Ser-28, and Ser-132. Disordered regions lie at residues 92 to 136 (AENK…SAGT), 157 to 224 (AKHK…RRRQ), and 269 to 527 (LLEE…WQEV). The segment covering 157–176 (AKHKLAVKPKKQRVSKKHRR) has biased composition (basic residues). Basic and acidic residues-rich tracts occupy residues 200–211 (PGEDKPTWHEEE), 282–293 (EAERAPREEQQR), 302–322 (DAER…ERRR), and 329–362 (AEER…KRQE). A required for interaction with actin-capping proteins region spans residues 321 to 472 (RRLQAQAQAE…EQQGRSGDFQ (152 aa)). Composition is skewed to acidic residues over residues 363-376 (EEEA…EQQE) and 397-407 (EEEDLGEEEEE). Position 420 is a phosphoserine (Ser-420). Basic and acidic residues-rich tracts occupy residues 432–447 (DQER…HSEE) and 505–527 (VERK…WQEV). A Phosphoserine modification is found at Ser-556. Phosphothreonine is present on Thr-559. Disordered regions lie at residues 560-586 (PAKD…HALP), 629-788 (HAEA…TTEG), 815-1082 (EFTT…TEKV), and 1097-1186 (QKGF…ISDS). The segment covering 677–707 (KNAESDPRSSERDQLRPGDESTPRGRCDSRG) has biased composition (basic and acidic residues). Residues 732–742 (GTETSKQSTEA) show a composition bias toward polar residues. Over residues 768–783 (ELGKGPEKSEMHREPA) the composition is skewed to basic and acidic residues. 2 stretches are compositionally biased toward polar residues: residues 815 to 825 (EFTTSSDSETA) and 852 to 863 (TNYSLRFNCDQQ). The span at 876–889 (GDSADAGPPAAGSA) shows a compositional bias: low complexity. Residues 908 to 921 (QERKQAPSTRRDSA) are compositionally biased toward basic and acidic residues. Over residues 956–967 (PLAQKPALAPKP) the composition is skewed to low complexity. Thr-971 carries the phosphothreonine modification. Ser-975 and Ser-1017 each carry phosphoserine. Positions 994–1040 (GRPDPEPSEPSKEDQESSDRRPPSPPGPEERKGQKRDEEEEATERKP) are enriched in basic and acidic residues. Over residues 1047-1057 (ATQQEKPSQTP) the composition is skewed to polar residues. 2 stretches are compositionally biased toward basic and acidic residues: residues 1059–1082 (AGRK…TEKV) and 1099–1124 (GFRE…KLSK). Low complexity predominate over residues 1127–1139 (VSVSVQPGSSSVS). Positions 1151–1170 (PEEKRPETAVSRLERREQLK) are enriched in basic and acidic residues. Residues 1174-1183 (TLPTSVTVEI) show a composition bias toward polar residues.

As to quaternary structure, directly interacts with actin-capping proteins CAPZA1, CAPZA2 and CAPZB; this interaction decreases the binding of capping proteins to actin. Expressed in intestinal epithelial cells (at protein level).

The protein resides in the cytoplasm. It is found in the cytosol. In terms of biological role, involved in epithelial cell integrity by acting on the maintenance of the actin cytoskeleton. Positively regulates the actin polymerization, by inhibiting the interaction of actin-capping proteins with actin. The chain is Capping protein-inhibiting regulator of actin dynamics from Homo sapiens (Human).